The chain runs to 84 residues: Large ribosomal subunit protein bL28 (84 aa).

Belongs to the bacterial ribosomal protein bL28 family.

This chain is Large ribosomal subunit protein bL28, found in Clostridium perfringens (strain 13 / Type A).